The chain runs to 477 residues: (R)-2-hydroxyglutaryl-CoA dehydratase, subunit alpha (477 aa).

The protein belongs to the FldB/FldC dehydratase alpha/beta subunit family. As to quaternary structure, the (R)-2-hydroxyglutaryl-CoA dehydratase enzyme system is a heterodimer composed of an alpha subunit (HgdA) and a beta subunit (HgdB). It depends on [4Fe-4S] cluster as a cofactor. The cofactor is FMN. Mg(2+) is required as a cofactor.

It is found in the cytoplasm. It catalyses the reaction (R)-2-hydroxyglutaryl-CoA = (2E)-glutaconyl-CoA + H2O. Its pathway is amino-acid degradation; L-glutamate degradation via hydroxyglutarate pathway; crotonoyl-CoA from L-glutamate: step 4/5. Activated by the HgdC. Reversibly inactivated by oxidants such as 2-nitrophenol, 3-nitrophenol, 4-nitrophenol, 4-nitrobenzoate, carbonyl cyanide 4-(trifluoromethoxy)phenylhydrazone (FCCP) and chloramphenicol. Irreversibly inactivated by oxidants such as hydroxylamine and nitrite. Its function is as follows. Involved in the fermentation of L-glutamate via the hydroxyglutarate pathway. Catalyzes the reversible syn-elimination of water from (R)-2-hydroxyglutaryl-CoA to yield (E)-glutaconyl-CoA. The dehydration mechanism involves a transient one electron reduction of the thioester from (R)-2-hydroxyglutaryl-CoA, generating a ketyl radical. Prior to (E)-glutaconyl-CoA formation, the ketyl radical is subsequently reoxidized by electron transfer back to the HgdA-HgdB complex (CompD) to avoid change in oxidation state of the substrate. The appropriate redox state of dehydratase HgdA-HgdB complex (CompD) is maintained by HgdC (CompA) via hydrolysis of ATP and ATP-dependent electron transfer. Since the electron is recycled, the dehydratase is able to perform several turnovers with only catalytic amounts of ATP and substoichiometric amounts of HgdC (CompA). The protein is (R)-2-hydroxyglutaryl-CoA dehydratase, subunit alpha of Acidaminococcus fermentans (strain ATCC 25085 / DSM 20731 / CCUG 9996 / CIP 106432 / VR4).